Here is a 286-residue protein sequence, read N- to C-terminus: Expansin-like protein 1 (286 aa).

An N-terminal signal peptide occupies residues 1–21; that stretch reads MKTFVLFVILLCLTFLSISKS. The Extracellular segment spans residues 22–265; it reads ETCPFSQSLV…TGASIGTPSD (244 aa). One can recognise an Expansin-like EG45 domain in the interval 44-145; that stretch reads AGNCGYENLM…YKVPCGVNGN (102 aa). 2 cysteine pairs are disulfide-bonded: C47–C77 and C80–C140. N-linked (GlcNAc...) asparagine glycosylation is found at N82 and N89. Residues 266–286 form a helical membrane-spanning segment; sequence ASSLTLYALFSLTILFLVMLN.

Belongs to the expansin family. Expansin A subfamily.

The protein resides in the membrane. May serve to lubricate the movement of the cellulose microfibrils during cell growth and wall extension and/or they may serve to maintain the fluid state of the slug cell wall. The polypeptide is Expansin-like protein 1 (expl1) (Dictyostelium discoideum (Social amoeba)).